We begin with the raw amino-acid sequence, 142 residues long: Small heat shock protein IbpB (142 aa).

In terms of domain architecture, sHSP spans 26–137; that stretch reads TAEHQAFPPY…APQRIAISDR (112 aa).

The protein belongs to the small heat shock protein (HSP20) family. In terms of assembly, homodimer. Forms homomultimers of about 100-150 subunits at optimal growth temperatures. Conformation changes to oligomers at high temperatures or high ionic concentrations. The decrease in size of the multimers is accompanied by an increase in chaperone activity.

It is found in the cytoplasm. In terms of biological role, associates with aggregated proteins, together with IbpA, to stabilize and protect them from irreversible denaturation and extensive proteolysis during heat shock and oxidative stress. Aggregated proteins bound to the IbpAB complex are more efficiently refolded and reactivated by the ATP-dependent chaperone systems ClpB and DnaK/DnaJ/GrpE. Its activity is ATP-independent. The sequence is that of Small heat shock protein IbpB from Enterobacter sp. (strain 638).